The following is a 797-amino-acid chain: Striatin-3 (797 aa).

Residue Met-1 is modified to N-acetylmethionine. Composition is skewed to gly residues over residues Met-1–Gly-13 and Gly-23–Pro-43. Positions Met-1 to Pro-60 are disordered. Over residues Pro-44 to Glu-56 the composition is skewed to low complexity. The segment at Tyr-71–Phe-79 is caveolin-binding. The stretch at Ala-77 to Lys-136 forms a coiled coil. Thr-150 is subject to Phosphothreonine. Residues Gln-166 to Leu-183 are calmodulin-binding. A phosphoserine mark is found at Ser-202, Ser-214, and Ser-229. Disordered stretches follow at residues Leu-224–Met-278 and Asp-313–Ala-338. The span at Pro-230 to Ser-241 shows a compositional bias: basic and acidic residues. The span at Asn-253–Met-265 shows a compositional bias: acidic residues. 2 positions are modified to phosphoserine: Ser-257 and Ser-335. WD repeat units follow at residues Ser-478–Lys-517, Ala-531–Tyr-570, Gly-584–Cys-623, Gln-679–Ser-718, Ala-721–Glu-760, and Lys-767–Val-797.

It belongs to the WD repeat striatin family. Tetramerizes. Part of the core of STRIPAK complexes composed of PP2A catalytic and scaffolding subunits, the striatins (PP2A regulatory subunits), the striatin-associated proteins MOB4, STRIP1 and STRIP2, PDCD10 and members of the STE20 kinases, such as STK24 and STK26. The STRIPAK complex can be extended by adapter proteins such as SLMAP:SIKE1 or CTTNBP2NL. Interacts with CDC42BPB.

The protein localises to the cytoplasm. Its subcellular location is the membrane. Calmodulin-binding scaffolding protein which is the center of the striatin-interacting phosphatase and kinase (STRIPAK) complexes. STRIPAK complexes have critical roles in protein (de)phosphorylation and are regulators of multiple signaling pathways including Hippo, MAPK, nuclear receptor and cytoskeleton remodeling. Different types of STRIPAK complexes are involved in a variety of biological processes such as cell growth, differentiation, apoptosis, metabolism and immune regulation. This is Striatin-3 from Homo sapiens (Human).